The sequence spans 277 residues: Small ribosomal subunit protein uS3 (277 aa).

One can recognise a KH type-2 domain in the interval 43 to 111 (IRKVMNKDLE…QVQLNIFEVK (69 aa)). The disordered stretch occupies residues 216-277 (FEEQQAQQGN…EAAVEPETKE (62 aa)). Over residues 264–277 (EVSKEAAVEPETKE) the composition is skewed to basic and acidic residues.

The protein belongs to the universal ribosomal protein uS3 family. Part of the 30S ribosomal subunit. Forms a tight complex with proteins S10 and S14.

In terms of biological role, binds the lower part of the 30S subunit head. Binds mRNA in the 70S ribosome, positioning it for translation. This Bifidobacterium animalis subsp. lactis (strain AD011) protein is Small ribosomal subunit protein uS3.